The following is a 246-amino-acid chain: Putative pectinesterase 57 (246 aa).

N-linked (GlcNAc...) asparagine glycans are attached at residues Asn127 and Asn143. Residue Thr152 coordinates substrate. An N-linked (GlcNAc...) asparagine glycan is attached at Asn174. Asp205 functions as the Proton donor in the catalytic mechanism. The Nucleophile role is filled by Asp226.

The protein belongs to the pectinesterase family.

The enzyme catalyses [(1-&gt;4)-alpha-D-galacturonosyl methyl ester](n) + n H2O = [(1-&gt;4)-alpha-D-galacturonosyl](n) + n methanol + n H(+). It participates in glycan metabolism; pectin degradation; 2-dehydro-3-deoxy-D-gluconate from pectin: step 1/5. Its function is as follows. Acts in the modification of cell walls via demethylesterification of cell wall pectin. The sequence is that of Putative pectinesterase 57 (PME57) from Arabidopsis thaliana (Mouse-ear cress).